We begin with the raw amino-acid sequence, 319 residues long: Ferrochelatase (319 aa).

Residues His193 and Glu274 each coordinate Fe cation.

Belongs to the ferrochelatase family.

The protein resides in the cytoplasm. The catalysed reaction is heme b + 2 H(+) = protoporphyrin IX + Fe(2+). The protein operates within porphyrin-containing compound metabolism; protoheme biosynthesis; protoheme from protoporphyrin-IX: step 1/1. Its function is as follows. Catalyzes the ferrous insertion into protoporphyrin IX. This chain is Ferrochelatase, found in Actinobacillus pleuropneumoniae serotype 3 (strain JL03).